The following is a 136-amino-acid chain: uncharacterized protein (136 aa).

An N-terminal signal peptide occupies residues methionine 1 to alanine 19.

This is an uncharacterized protein from Methanocaldococcus jannaschii (strain ATCC 43067 / DSM 2661 / JAL-1 / JCM 10045 / NBRC 100440) (Methanococcus jannaschii).